The following is a 206-amino-acid chain: LexA repressor (206 aa).

Residues 28 to 48 constitute a DNA-binding region (H-T-H motif); the sequence is RAEIARELGFRSANAAEEHLK. Active-site for autocatalytic cleavage activity residues include Ser123 and Lys160.

This sequence belongs to the peptidase S24 family. As to quaternary structure, homodimer.

The enzyme catalyses Hydrolysis of Ala-|-Gly bond in repressor LexA.. In terms of biological role, represses a number of genes involved in the response to DNA damage (SOS response), including recA and lexA. In the presence of single-stranded DNA, RecA interacts with LexA causing an autocatalytic cleavage which disrupts the DNA-binding part of LexA, leading to derepression of the SOS regulon and eventually DNA repair. In Vibrio campbellii (strain ATCC BAA-1116), this protein is LexA repressor.